Consider the following 188-residue polypeptide: Transmembrane protein 160 (188 aa).

Residues 1–96 (MGGGWWWARV…ISFMQSDMGR (96 aa)) constitute a mitochondrion transit peptide. The segment at 21–53 (SLQPPQRPRSGGARGSFAPGHGPRAGASPPPVS) is disordered. Serine 48 carries the post-translational modification Phosphoserine. The next 2 helical transmembrane spans lie at 102 to 122 (FFLL…VGLA) and 135 to 155 (AAAG…AVGL). The interval 168 to 188 (PEDDGAASTEGPDEAGRPPPE) is disordered.

The protein belongs to the TMEM160 family. In terms of tissue distribution, expressed in peripheral sensory neurons of dorsal root ganglia (DRG).

The protein localises to the mitochondrion inner membrane. In Mus musculus (Mouse), this protein is Transmembrane protein 160.